A 494-amino-acid polypeptide reads, in one-letter code: Histidine--tRNA ligase (494 aa).

Residues 1–20 (MAKDQKKQPRPKAETPKGFR) are disordered.

Belongs to the class-II aminoacyl-tRNA synthetase family. Homodimer.

The protein resides in the cytoplasm. The catalysed reaction is tRNA(His) + L-histidine + ATP = L-histidyl-tRNA(His) + AMP + diphosphate + H(+). The protein is Histidine--tRNA ligase of Paracoccus denitrificans (strain Pd 1222).